The sequence spans 410 residues: Multifunctional CCA protein (410 aa).

2 residues coordinate ATP: G8 and R11. CTP is bound by residues G8 and R11. Mg(2+) is bound by residues E21 and D23. Residues R91, R137, and R140 each coordinate ATP. The CTP site is built by R91, R137, and R140. Residues 228–329 enclose the HD domain; that stretch reads TGIHSLMTLR…VKLLEQVDAF (102 aa).

The protein belongs to the tRNA nucleotidyltransferase/poly(A) polymerase family. Bacterial CCA-adding enzyme type 1 subfamily. Monomer. Can also form homodimers and oligomers. Requires Mg(2+) as cofactor. Ni(2+) is required as a cofactor.

The enzyme catalyses a tRNA precursor + 2 CTP + ATP = a tRNA with a 3' CCA end + 3 diphosphate. It carries out the reaction a tRNA with a 3' CCA end + 2 CTP + ATP = a tRNA with a 3' CCACCA end + 3 diphosphate. In terms of biological role, catalyzes the addition and repair of the essential 3'-terminal CCA sequence in tRNAs without using a nucleic acid template. Adds these three nucleotides in the order of C, C, and A to the tRNA nucleotide-73, using CTP and ATP as substrates and producing inorganic pyrophosphate. tRNA 3'-terminal CCA addition is required both for tRNA processing and repair. Also involved in tRNA surveillance by mediating tandem CCA addition to generate a CCACCA at the 3' terminus of unstable tRNAs. While stable tRNAs receive only 3'-terminal CCA, unstable tRNAs are marked with CCACCA and rapidly degraded. This chain is Multifunctional CCA protein, found in Legionella pneumophila subsp. pneumophila (strain Philadelphia 1 / ATCC 33152 / DSM 7513).